The sequence spans 820 residues: Leucine--tRNA ligase (820 aa).

The 'HIGH' region motif lies at 42-52 (PYPSGDLHMGH). The 'KMSKS' region motif lies at 576 to 580 (KMSKS). Lys-579 contributes to the ATP binding site.

Belongs to the class-I aminoacyl-tRNA synthetase family.

The protein resides in the cytoplasm. It carries out the reaction tRNA(Leu) + L-leucine + ATP = L-leucyl-tRNA(Leu) + AMP + diphosphate. The sequence is that of Leucine--tRNA ligase from Coxiella burnetii (strain CbuK_Q154) (Coxiella burnetii (strain Q154)).